Consider the following 330-residue polypeptide: Glycerol-3-phosphate dehydrogenase [NAD(P)+] (330 aa).

NADPH-binding residues include Trp-11, Arg-33, and Lys-105. 3 residues coordinate sn-glycerol 3-phosphate: Lys-105, Gly-133, and Ser-135. Residue Ala-137 participates in NADPH binding. Sn-glycerol 3-phosphate is bound by residues Lys-188, Asp-241, Ser-251, Arg-252, and Asn-253. Residue Lys-188 is the Proton acceptor of the active site. Arg-252 is a binding site for NADPH. NADPH contacts are provided by Val-276 and Glu-278.

It belongs to the NAD-dependent glycerol-3-phosphate dehydrogenase family.

The protein resides in the cytoplasm. It catalyses the reaction sn-glycerol 3-phosphate + NAD(+) = dihydroxyacetone phosphate + NADH + H(+). The enzyme catalyses sn-glycerol 3-phosphate + NADP(+) = dihydroxyacetone phosphate + NADPH + H(+). Its pathway is membrane lipid metabolism; glycerophospholipid metabolism. Catalyzes the reduction of the glycolytic intermediate dihydroxyacetone phosphate (DHAP) to sn-glycerol 3-phosphate (G3P), the key precursor for phospholipid synthesis. The polypeptide is Glycerol-3-phosphate dehydrogenase [NAD(P)+] (Acidovorax sp. (strain JS42)).